We begin with the raw amino-acid sequence, 513 residues long: L-arabinose transport ATP-binding protein AraG (513 aa).

ABC transporter domains are found at residues 6–243 (LEMR…GMVG) and 264–508 (VKNW…TKTA). 38–45 (GENGAGKS) is a binding site for ATP.

The protein belongs to the ABC transporter superfamily.

It is found in the cell membrane. The enzyme catalyses L-arabinose(out) + ATP + H2O = L-arabinose(in) + ADP + phosphate + H(+). Functionally, part of the binding-protein-dependent transport system for L-arabinose. Probably responsible for energy coupling to the transport system. This Geobacillus stearothermophilus (Bacillus stearothermophilus) protein is L-arabinose transport ATP-binding protein AraG (araG).